An 87-amino-acid polypeptide reads, in one-letter code: Large ribosomal subunit protein bL27 (87 aa).

This sequence belongs to the bacterial ribosomal protein bL27 family.

This is Large ribosomal subunit protein bL27 from Dichelobacter nodosus (strain VCS1703A).